A 500-amino-acid chain; its full sequence is tRNA modification GTPase MnmE (500 aa).

The (6S)-5-formyl-5,6,7,8-tetrahydrofolate site is built by R24, E120, and K159. The TrmE-type G domain occupies 256-420; that stretch reads GIPVAIIGET…LEKKLVQAAA (165 aa). N266 is a K(+) binding site. GTP is bound by residues 266–271, 285–291, and 310–313; these read NAGKST, SDIHGTT, and DTAG. Mg(2+) is bound at residue S270. K(+) is bound by residues S285, I287, and T290. Position 291 (T291) interacts with Mg(2+). K500 contributes to the (6S)-5-formyl-5,6,7,8-tetrahydrofolate binding site.

The protein belongs to the TRAFAC class TrmE-Era-EngA-EngB-Septin-like GTPase superfamily. TrmE GTPase family. In terms of assembly, homodimer. Heterotetramer of two MnmE and two MnmG subunits. K(+) is required as a cofactor.

The protein localises to the cytoplasm. Its function is as follows. Exhibits a very high intrinsic GTPase hydrolysis rate. Involved in the addition of a carboxymethylaminomethyl (cmnm) group at the wobble position (U34) of certain tRNAs, forming tRNA-cmnm(5)s(2)U34. This chain is tRNA modification GTPase MnmE, found in Phocaeicola vulgatus (strain ATCC 8482 / DSM 1447 / JCM 5826 / CCUG 4940 / NBRC 14291 / NCTC 11154) (Bacteroides vulgatus).